Consider the following 239-residue polypeptide: Probable inner membrane transporter protein TsaS (239 aa).

The next 4 membrane-spanning stretches (helical) occupy residues 65–85 (AIGAILPGMAVGALIGLWLMG), 128–148 (GLVGVLEVMFATAGPMVIALL), 160–180 (ATVPVVMVVAASIAIAVLFGA), and 186–206 (AHTFERWLVALPIAFMGVVLG).

Belongs to the 4-toluene sulfonate uptake permease (TSUP) (TC 2.A.102) family. As to quaternary structure, part of a two-component transport system composed of TsaT and TsaS.

It localises to the cell inner membrane. Functionally, involved in the uptake of p-toluenesulphonate (TSA). In Comamonas testosteroni (Pseudomonas testosteroni), this protein is Probable inner membrane transporter protein TsaS (tsaS).